We begin with the raw amino-acid sequence, 130 residues long: Methylglyoxal synthase (130 aa).

The 130-residue stretch at 1-130 (MSKPRIALIA…DLARNMQDVC (130 aa)) folds into the MGS-like domain. Residues His11, Lys15, 37–40 (TGTT), and 57–58 (SG) contribute to the substrate site. Asp63 (proton donor/acceptor) is an active-site residue. His90 contributes to the substrate binding site.

It belongs to the methylglyoxal synthase family.

It catalyses the reaction dihydroxyacetone phosphate = methylglyoxal + phosphate. Catalyzes the formation of methylglyoxal from dihydroxyacetone phosphate. The protein is Methylglyoxal synthase of Burkholderia orbicola (strain AU 1054).